The sequence spans 184 residues: dTTP/UTP pyrophosphatase (184 aa).

The Proton acceptor role is filled by aspartate 67.

Belongs to the Maf family. YhdE subfamily. Requires a divalent metal cation as cofactor.

It is found in the cytoplasm. It catalyses the reaction dTTP + H2O = dTMP + diphosphate + H(+). It carries out the reaction UTP + H2O = UMP + diphosphate + H(+). Nucleoside triphosphate pyrophosphatase that hydrolyzes dTTP and UTP. May have a dual role in cell division arrest and in preventing the incorporation of modified nucleotides into cellular nucleic acids. This chain is dTTP/UTP pyrophosphatase, found in Elusimicrobium minutum (strain Pei191).